The chain runs to 637 residues: Biosynthetic arginine decarboxylase (637 aa).

Residue Lys-107 is modified to N6-(pyridoxal phosphate)lysine. A substrate-binding site is contributed by 289–299 (LDVGGGLGVDY).

It belongs to the Orn/Lys/Arg decarboxylase class-II family. SpeA subfamily. Mg(2+) is required as a cofactor. The cofactor is pyridoxal 5'-phosphate.

It carries out the reaction L-arginine + H(+) = agmatine + CO2. Functionally, catalyzes the biosynthesis of agmatine from arginine. This chain is Biosynthetic arginine decarboxylase, found in Thermosynechococcus vestitus (strain NIES-2133 / IAM M-273 / BP-1).